We begin with the raw amino-acid sequence, 607 residues long: Glutamine--fructose-6-phosphate aminotransferase [isomerizing] (607 aa).

Cysteine 2 functions as the Nucleophile; for GATase activity in the catalytic mechanism. The 216-residue stretch at 2 to 217 (CGIIGIIGND…DGDWAVLTRN (216 aa)) folds into the Glutamine amidotransferase type-2 domain. SIS domains are found at residues 283–422 (IGID…ARGA) and 455–597 (VCHD…VDQP). Lysine 602 functions as the For Fru-6P isomerization activity in the catalytic mechanism.

In terms of assembly, homodimer.

The protein localises to the cytoplasm. The enzyme catalyses D-fructose 6-phosphate + L-glutamine = D-glucosamine 6-phosphate + L-glutamate. Functionally, catalyzes the first step in hexosamine metabolism, converting fructose-6P into glucosamine-6P using glutamine as a nitrogen source. The chain is Glutamine--fructose-6-phosphate aminotransferase [isomerizing] from Brucella abortus biovar 1 (strain 9-941).